Consider the following 607-residue polypeptide: DNA mismatch repair protein MutL (607 aa).

Belongs to the DNA mismatch repair MutL/HexB family.

Functionally, this protein is involved in the repair of mismatches in DNA. It is required for dam-dependent methyl-directed DNA mismatch repair. May act as a 'molecular matchmaker', a protein that promotes the formation of a stable complex between two or more DNA-binding proteins in an ATP-dependent manner without itself being part of a final effector complex. In Paramagnetospirillum magneticum (strain ATCC 700264 / AMB-1) (Magnetospirillum magneticum), this protein is DNA mismatch repair protein MutL.